Consider the following 120-residue polypeptide: Large ribosomal subunit protein eL18 (120 aa).

It belongs to the eukaryotic ribosomal protein eL18 family.

The sequence is that of Large ribosomal subunit protein eL18 from Methanococcus maripaludis (strain DSM 14266 / JCM 13030 / NBRC 101832 / S2 / LL).